The sequence spans 265 residues: Oxygen-evolving enhancer protein 2-2, chloroplastic (265 aa).

The transit peptide at 1–79 (MASTQCFLHH…VGSKVSPADA (79 aa)) directs the protein to the chloroplast.

It belongs to the PsbP family.

It is found in the plastid. The protein localises to the chloroplast thylakoid membrane. Functionally, may be involved in the regulation of photosystem II. The sequence is that of Oxygen-evolving enhancer protein 2-2, chloroplastic (PSBP2) from Nicotiana tabacum (Common tobacco).